Consider the following 354-residue polypeptide: Methylthioribose-1-phosphate isomerase (354 aa).

Substrate is bound by residues 58–60 (RGA), arginine 101, and glutamine 204. Residue aspartate 245 is the Proton donor of the active site. 255 to 256 (NK) is a substrate binding site.

This sequence belongs to the eIF-2B alpha/beta/delta subunits family. MtnA subfamily.

It catalyses the reaction 5-(methylsulfanyl)-alpha-D-ribose 1-phosphate = 5-(methylsulfanyl)-D-ribulose 1-phosphate. The protein operates within amino-acid biosynthesis; L-methionine biosynthesis via salvage pathway; L-methionine from S-methyl-5-thio-alpha-D-ribose 1-phosphate: step 1/6. Its function is as follows. Catalyzes the interconversion of methylthioribose-1-phosphate (MTR-1-P) into methylthioribulose-1-phosphate (MTRu-1-P). This is Methylthioribose-1-phosphate isomerase from Xylella fastidiosa (strain M12).